We begin with the raw amino-acid sequence, 471 residues long: Anthranilate 1,2-dioxygenase large subunit (471 aa).

Positions 52–160 (IYACHESEIP…IASYRGFVFV (109 aa)) constitute a Rieske domain. Positions 93, 95, 113, and 116 each coordinate [2Fe-2S] cluster. H220, H225, and D379 together coordinate Fe cation.

It belongs to the bacterial ring-hydroxylating dioxygenase alpha subunit family. In terms of assembly, the anthranilate dioxygenase (AntDO) multicomponent enzyme system is composed of an oxygenase component and a NADH:acceptor reductase component (AntC). The oxygenase component is a heterohexamer of 3 large (AntA) and 3 small (AntB) subunits. Fe cation serves as cofactor. [2Fe-2S] cluster is required as a cofactor.

The enzyme catalyses anthranilate + NADH + O2 + 3 H(+) = catechol + NH4(+) + CO2 + NAD(+). It catalyses the reaction anthranilate + NADPH + O2 + 3 H(+) = catechol + NH4(+) + CO2 + NADP(+). The protein operates within aromatic compound metabolism; anthranilate degradation via hydroxylation; catechol from anthranilate: step 1/1. Functionally, component of anthranilate dioxygenase multicomponent enzyme system which catalyzes the incorporation of both atoms of molecular oxygen into anthranilate to form catechol. The chain is Anthranilate 1,2-dioxygenase large subunit from Acinetobacter baylyi (strain ATCC 33305 / BD413 / ADP1).